We begin with the raw amino-acid sequence, 345 residues long: 4-hydroxy-2-oxovalerate aldolase 1 (345 aa).

Residues 9 to 261 (IRVTDTSLRD…RTGIDFFAIA (253 aa)) form the Pyruvate carboxyltransferase domain. Residue 17 to 18 (RD) coordinates substrate. D18 contributes to the Mn(2+) binding site. H21 acts as the Proton acceptor in catalysis. Residues S171 and H200 each contribute to the substrate site. Mn(2+) is bound by residues H200 and H202. Y291 is a substrate binding site.

It belongs to the 4-hydroxy-2-oxovalerate aldolase family.

It carries out the reaction (S)-4-hydroxy-2-oxopentanoate = acetaldehyde + pyruvate. The sequence is that of 4-hydroxy-2-oxovalerate aldolase 1 from Nocardia farcinica (strain IFM 10152).